The sequence spans 206 residues: Ribosomal RNA large subunit methyltransferase E (206 aa).

Residues glycine 63, tryptophan 65, aspartate 83, aspartate 99, and aspartate 124 each coordinate S-adenosyl-L-methionine. Catalysis depends on lysine 164, which acts as the Proton acceptor.

The protein belongs to the class I-like SAM-binding methyltransferase superfamily. RNA methyltransferase RlmE family.

The protein resides in the cytoplasm. The enzyme catalyses uridine(2552) in 23S rRNA + S-adenosyl-L-methionine = 2'-O-methyluridine(2552) in 23S rRNA + S-adenosyl-L-homocysteine + H(+). Functionally, specifically methylates the uridine in position 2552 of 23S rRNA at the 2'-O position of the ribose in the fully assembled 50S ribosomal subunit. The protein is Ribosomal RNA large subunit methyltransferase E of Buchnera aphidicola subsp. Schizaphis graminum (strain Sg).